The following is a 116-amino-acid chain: UPF0298 protein EF_2453 (116 aa).

The protein belongs to the UPF0298 family.

The protein localises to the cytoplasm. The protein is UPF0298 protein EF_2453 of Enterococcus faecalis (strain ATCC 700802 / V583).